The chain runs to 868 residues: Transcription factor pynR (868 aa).

The zn(2)-C6 fungal-type DNA-binding region spans C11–C37. Disordered stretches follow at residues N51 to V88, L662 to S683, S715 to L761, and G829 to N868. Composition is skewed to low complexity over residues S663 to S683 and S715 to H727.

The protein resides in the nucleus. Transcription factor that regulates the expression of the gene cluster that mediates the biosynthesis of pyranonigrins, a family of antioxidative compounds. In Aspergillus niger (strain ATCC MYA-4892 / CBS 513.88 / FGSC A1513), this protein is Transcription factor pynR.